A 306-amino-acid chain; its full sequence is MATEIPVGRKVRVKVPGSSANLGPGFDSLGLALSIYDHVEVEVIDSGLEVEVTGEGQGEVPLDERHLVVRAIRAGLKKADVIARGLRVRCNNSIPQSRGLGSSAAAAVSGVVAANALAGDVLDTDTIIQLASTFEGHPDNVAASVLGSAVVSWTNIPVDGTEPTYHASPVTVHPDIRATALIPNSHASTEAVRRVLPSDIPHLDARFNVSRTGVLLVALSKDPSLLWEGTRDRMHQPFRAEVLPISSEWVNRLRNQGYPAFLSGAGPTVLVLSTEPVEEALLQEARDRGIRVEELTVAGPVTVEDA.

ATP is bound at residue 95 to 105 (PQSRGLGSSAA).

It belongs to the GHMP kinase family. Homoserine kinase subfamily.

Its subcellular location is the cytoplasm. It catalyses the reaction L-homoserine + ATP = O-phospho-L-homoserine + ADP + H(+). It functions in the pathway amino-acid biosynthesis; L-threonine biosynthesis; L-threonine from L-aspartate: step 4/5. Functionally, catalyzes the ATP-dependent phosphorylation of L-homoserine to L-homoserine phosphate. This chain is Homoserine kinase, found in Corynebacterium urealyticum (strain ATCC 43042 / DSM 7109).